The following is a 124-amino-acid chain: Putative transmembrane protein FLJ36131 (124 aa).

The Cytoplasmic segment spans residues 1 to 2 (MY). The helical transmembrane segment at 3-23 (VSISFLLGLSHLVLCCLLTFI) threads the bilayer. Over 24-124 (VNFYLPPESI…LLTTTSYSVS (101 aa)) the chain is Extracellular. An N-linked (GlcNAc...) asparagine glycan is attached at N41.

It localises to the membrane. In Homo sapiens (Human), this protein is Putative transmembrane protein FLJ36131.